A 259-amino-acid chain; its full sequence is Protein POLYCHOME (259 aa).

The interval 236–259 (KMKSTPSAKRAEREKRVRTLMSMR) is disordered.

In terms of assembly, interacts with APC/C activators such as APC5, FZR2, FZR3, CDC20.1 and CDC20.5. Expressed mainly in actively dividing cells (e.g. central cylinder of the root tip, young leaves and vascular tissues).

Its subcellular location is the nucleus. In terms of biological role, negative regulator of the anaphase-promoting complex/cyclosome (APC/C) ubiquitin ligase required for proper mitotic progression and cell fate determination; inhibits premature cell differentiation. Prevents DNA endoreplication by promoting the maintenance of the mitotic state by preferentially inhibiting APC/C(FZR) and triggering cyclins accumulation (e.g. CYCB1-1, CYCB1-2 and CYCA2-3) in a temporal manner. Required for megagametophyte and endosperm development. Counteracts the activity of CCS52A1 thus inhibiting the turnover of CYCA2-3. Confers immunity to bacterial pathogens (e.g. Pseudomonas syringae pv. tomato DC3000), which is associated with increased expression of disease resistance (R) genes. The protein is Protein POLYCHOME (PYM) of Arabidopsis thaliana (Mouse-ear cress).